Consider the following 332-residue polypeptide: Galectin-4 (332 aa).

Galectin domains lie at 19-150 (YHNP…INFI) and 203-332 (FNGR…YVQI). 265–271 (WGSEERK) contributes to the a beta-D-galactoside binding site. A Phosphoserine modification is found at S267.

In terms of assembly, monomer.

Functionally, galectin that binds lactose and a related range of sugars. May be involved in the assembly of adherens junctions. The polypeptide is Galectin-4 (LGALS4) (Bos taurus (Bovine)).